An 804-amino-acid polypeptide reads, in one-letter code: Elongation factor G, mitochondrial (804 aa).

The N-terminal 9 residues, 1–9 (MVRPAQVRA), are a transit peptide targeting the mitochondrion. A tr-type G domain is found at 103 to 389 (SKVRNIGIAA…GVCDYLPNPS (287 aa)). GTP is bound by residues 112 to 119 (AHIDSGKT), 187 to 191 (DTPGH), and 241 to 244 (NKMD).

The protein belongs to the TRAFAC class translation factor GTPase superfamily. Classic translation factor GTPase family. EF-G/EF-2 subfamily.

The protein localises to the mitochondrion. Its pathway is protein biosynthesis; polypeptide chain elongation. Mitochondrial GTPase that catalyzes the GTP-dependent ribosomal translocation step during translation elongation. During this step, the ribosome changes from the pre-translocational (PRE) to the post-translocational (POST) state as the newly formed A-site-bound peptidyl-tRNA and P-site-bound deacylated tRNA move to the P and E sites, respectively. Catalyzes the coordinated movement of the two tRNA molecules, the mRNA and conformational changes in the ribosome. This is Elongation factor G, mitochondrial (mef1) from Talaromyces stipitatus (strain ATCC 10500 / CBS 375.48 / QM 6759 / NRRL 1006) (Penicillium stipitatum).